Reading from the N-terminus, the 453-residue chain is Citrate (Re)-synthase (453 aa).

The Pyruvate carboxyltransferase domain occupies 46-316 (IYITDTTFRD…TKNMKLHVIT (271 aa)).

This sequence belongs to the alpha-IPM synthase/homocitrate synthase family. Mn(2+) serves as cofactor. Co(2+) is required as a cofactor. Requires Mg(2+) as cofactor.

The catalysed reaction is oxaloacetate + acetyl-CoA + H2O = citrate + CoA + H(+). Its activity is regulated as follows. Inhibited by p-chloromercuribenzoate (pCMB), EDTA, Zn(2+) ions, and under aerobic conditions. Catalyzes the condensation of the acetyl group of acetyl-CoA with oxaloacetate to form citrate. This enzyme is highly Re-face stereospecific with respect to the C-2 of oxaloacetate. The chain is Citrate (Re)-synthase from Clostridium kluyveri (strain ATCC 8527 / DSM 555 / NBRC 12016 / NCIMB 10680 / K1).